The chain runs to 467 residues: Cysteine--tRNA ligase (467 aa).

A Zn(2+)-binding site is contributed by Cys-28. A 'HIGH' region motif is present at residues 30-40; that stretch reads PTVYNYIHVGN. Cys-212, His-237, and Glu-241 together coordinate Zn(2+). The 'KMSKS' region motif lies at 269-273; it reads KMSKS. Lys-272 contacts ATP.

It belongs to the class-I aminoacyl-tRNA synthetase family. Monomer. Zn(2+) serves as cofactor.

The protein resides in the cytoplasm. The enzyme catalyses tRNA(Cys) + L-cysteine + ATP = L-cysteinyl-tRNA(Cys) + AMP + diphosphate. The sequence is that of Cysteine--tRNA ligase from Oenococcus oeni (strain ATCC BAA-331 / PSU-1).